Consider the following 100-residue polypeptide: Eukaryotic translation initiation factor 4E-binding protein 3 (100 aa).

The YXXXXLphi motif motif lies at 40 to 46; the sequence is YDRKFLL. Residues 81-100 are disordered; sequence LKEQETEEEIPDDAQFEMDI. Residues 85 to 100 are compositionally biased toward acidic residues; it reads ETEEEIPDDAQFEMDI. Residues 96 to 100 carry the TOS motif motif; the sequence is FEMDI.

Belongs to the eIF4E-binding protein family. In terms of assembly, interacts with EIF4E. Interacts with RPA2 (in unphosphorylated form via N-terminus); the interaction enhances EIF4EBP3-mediated inhibition of EIF4E-mediated mRNA nuclear export. Phosphorylated. In terms of tissue distribution, expression is highest in skeletal muscle, heart, kidney, and pancreas, whereas there is very little expression in brain and thymus.

It localises to the cytoplasm. Its subcellular location is the nucleus. Its function is as follows. Repressor of translation initiation that regulates EIF4E activity by preventing its assembly into the eIF4F complex: the hypophosphorylated form competes with EIF4G1/EIF4G3 and strongly binds to EIF4E, leading to repression of translation. In contrast, the hyperphosphorylated form dissociates from EIF4E, allowing interaction between EIF4G1/EIF4G3 and EIF4E, leading to initiation of translation. Inhibits EIF4E-mediated mRNA nuclear export. The chain is Eukaryotic translation initiation factor 4E-binding protein 3 (EIF4EBP3) from Homo sapiens (Human).